The chain runs to 428 residues: D-amino acid dehydrogenase (428 aa).

Valine 3–tyrosine 17 is an FAD binding site.

It belongs to the DadA oxidoreductase family. FAD serves as cofactor.

It catalyses the reaction a D-alpha-amino acid + A + H2O = a 2-oxocarboxylate + AH2 + NH4(+). It functions in the pathway amino-acid degradation; D-alanine degradation; NH(3) and pyruvate from D-alanine: step 1/1. In terms of biological role, oxidative deamination of D-amino acids. The sequence is that of D-amino acid dehydrogenase from Burkholderia pseudomallei (strain K96243).